The following is a 373-amino-acid chain: Queuine tRNA-ribosyltransferase (373 aa).

Residue Asp93 is the Proton acceptor of the active site. Residues 93-97, Asp147, Gln190, and Gly219 contribute to the substrate site; that span reads DSGGF. Residues 250-256 are RNA binding; the sequence is GVGEPVD. The Nucleophile role is filled by Asp269. An RNA binding; important for wobble base 34 recognition region spans residues 274-278; it reads TRLAR. Zn(2+) contacts are provided by Cys307, Cys309, Cys312, and His338.

It belongs to the queuine tRNA-ribosyltransferase family. In terms of assembly, homodimer. Within each dimer, one monomer is responsible for RNA recognition and catalysis, while the other monomer binds to the replacement base PreQ1. The cofactor is Zn(2+).

The catalysed reaction is 7-aminomethyl-7-carbaguanine + guanosine(34) in tRNA = 7-aminomethyl-7-carbaguanosine(34) in tRNA + guanine. It participates in tRNA modification; tRNA-queuosine biosynthesis. Catalyzes the base-exchange of a guanine (G) residue with the queuine precursor 7-aminomethyl-7-deazaguanine (PreQ1) at position 34 (anticodon wobble position) in tRNAs with GU(N) anticodons (tRNA-Asp, -Asn, -His and -Tyr). Catalysis occurs through a double-displacement mechanism. The nucleophile active site attacks the C1' of nucleotide 34 to detach the guanine base from the RNA, forming a covalent enzyme-RNA intermediate. The proton acceptor active site deprotonates the incoming PreQ1, allowing a nucleophilic attack on the C1' of the ribose to form the product. After dissociation, two additional enzymatic reactions on the tRNA convert PreQ1 to queuine (Q), resulting in the hypermodified nucleoside queuosine (7-(((4,5-cis-dihydroxy-2-cyclopenten-1-yl)amino)methyl)-7-deazaguanosine). The protein is Queuine tRNA-ribosyltransferase of Fusobacterium nucleatum subsp. nucleatum (strain ATCC 25586 / DSM 15643 / BCRC 10681 / CIP 101130 / JCM 8532 / KCTC 2640 / LMG 13131 / VPI 4355).